The chain runs to 282 residues: L-allo-isoleucyltransferase (282 aa).

The Acyl-thioester intermediate role is filled by Cys105. Positions 169-261 constitute an AB hydrolase-1 domain; the sequence is HTQSTYTPSD…DGQHHDFVDG (93 aa).

The protein belongs to the AB hydrolase superfamily.

The enzyme catalyses holo-[CmaD peptidyl-carrier protein] + L-alloisoleucyl-[CmaA peptidyl-carrier protein] = L-alloisoleucyl-[CmaD peptidyl-carrier protein] + holo-[CmaA peptidyl-carrier protein]. In terms of biological role, involved in the biosynthesis of the phytotoxin coronatine (COR). Catalyzes the transfer of the aminoacyl group covalently attached to the pantetheinyl arm of CmaA to the holo-pantetheinyl arm of CmaD. During the shuttling process, CmaE generates a covalent-aminoacyl-S-Cys enzyme intermediate by the action of its donor substrate L-aminoacyl-S-CmaA and delivers it to the sulfhydryl group attached to the phosphopantetheinyl arm on CmaD. The protein is L-allo-isoleucyltransferase of Pseudomonas savastanoi pv. glycinea (Pseudomonas syringae pv. glycinea).